The sequence spans 142 residues: Immunoglobulin iota chain (142 aa).

A signal peptide spans 1–19 (MAWTSVLLMLLAYLTGCGP). Residues 20–41 (QPMVHQPPLASSSLGATIRLSC) form a framework-1 region. An intrachain disulfide couples cysteine 41 to cysteine 115. Positions 42–56 (TLSNDHNIGIYSIYW) are complementarity-determining-1. The framework-2 stretch occupies residues 57–70 (YQQRPGHPPRFLLR). Residues 71–81 (YFSHSDKHQGP) are complementarity-determining-2. The framework-3 stretch occupies residues 82–115 (DIPPRFSGSKDTTRNLGYLSISELQPEDEAVYYC).

It belongs to the immunoglobulin superfamily. As to quaternary structure, interacts with IGLL1. Interacts with SYNV1/HRD1 (via N-terminus); this interaction leads to increased VPREB1A ubiquitination and degradation in pre-B cells, possibly through a lysosomal, not proteasomal, pathway. As to expression, only expressed by pre-B-cells.

The protein resides in the endoplasmic reticulum. Associates with the Ig-mu chain to form a molecular complex that is expressed on the surface of pre-B-cells. This complex presumably regulates Ig gene rearrangements in the early steps of B-cell differentiation. The chain is Immunoglobulin iota chain from Mus musculus (Mouse).